Consider the following 456-residue polypeptide: Bestrophin homolog 18 (456 aa).

Transmembrane regions (helical) follow at residues 29–49 (WSAIWIQYSVWLGLYFLVSAI), 83–103 (GFFIAGVLRRFWYLYDIIGFI), 234–254 (IIYPTIVCLAVHMYFFVGILA), and 267–287 (MIDLVFPFMTSIQFVFYMGWL). Residues 416–456 (ASSSRSLERQRSPGSFRMETLTPGSPTNTPIEPIDKIDKKK) form a disordered region.

The protein belongs to the anion channel-forming bestrophin (TC 1.A.46) family. Calcium-sensitive chloride channel subfamily. As to quaternary structure, forms oligomers.

Its subcellular location is the cell membrane. In terms of biological role, forms chloride channels. The protein is Bestrophin homolog 18 (best-18) of Caenorhabditis elegans.